The chain runs to 609 residues: Invertase (609 aa).

The signal sequence occupies residues 1–14; sequence MLKLLSLMVPLASA. N-linked (GlcNAc...) asparagine glycans are attached at residues N23, N32, and N36. Substrate-binding positions include 56-59, Q77, and 119-120; these read WMND and FS. D59 is a catalytic residue. Residues N128, N129, and N135 are each glycosylated (N-linked (GlcNAc...) asparagine). Residue 187 to 188 coordinates substrate; sequence RD. 2 N-linked (GlcNAc...) asparagine glycosylation sites follow: N227 and N233. E245 contacts substrate. N-linked (GlcNAc...) asparagine glycans are attached at residues N257, N267, N277, N284, N291, N298, N303, and N345. A substrate-binding site is contributed by W389. N-linked (GlcNAc...) asparagine glycosylation is found at N409, N420, N440, N448, N452, N477, N545, and N566.

This sequence belongs to the glycosyl hydrolase 32 family.

It carries out the reaction Hydrolysis of terminal non-reducing beta-D-fructofuranoside residues in beta-D-fructofuranosides.. The polypeptide is Invertase (INV1) (Kluyveromyces lactis (strain ATCC 8585 / CBS 2359 / DSM 70799 / NBRC 1267 / NRRL Y-1140 / WM37) (Yeast)).